We begin with the raw amino-acid sequence, 337 residues long: GTPase Obg (337 aa).

In terms of domain architecture, Obg spans 1-159 (MDFIDEVKLY…RNIVLKLKVL (159 aa)). Residues 160-329 (SDVGIIGMPN…LNEKVKTKEI (170 aa)) enclose the OBG-type G domain. GTP-binding positions include 166–173 (GMPNVGKS), 191–195 (FTTIR), 212–215 (DIPG), 279–282 (NKCD), and 310–312 (DDD). 2 residues coordinate Mg(2+): Ser173 and Thr193.

Belongs to the TRAFAC class OBG-HflX-like GTPase superfamily. OBG GTPase family. As to quaternary structure, monomer. The cofactor is Mg(2+).

It is found in the cytoplasm. Functionally, an essential GTPase which binds GTP, GDP and possibly (p)ppGpp with moderate affinity, with high nucleotide exchange rates and a fairly low GTP hydrolysis rate. Plays a role in control of the cell cycle, stress response, ribosome biogenesis and in those bacteria that undergo differentiation, in morphogenesis control. The chain is GTPase Obg from Wolbachia pipientis subsp. Culex pipiens (strain wPip).